Here is a 171-residue protein sequence, read N- to C-terminus: Large ribosomal subunit protein bL9 (171 aa).

This sequence belongs to the bacterial ribosomal protein bL9 family.

Binds to the 23S rRNA. This chain is Large ribosomal subunit protein bL9, found in Rickettsia prowazekii (strain Madrid E).